Reading from the N-terminus, the 311-residue chain is Acetyl-coenzyme A carboxylase carboxyl transferase subunit alpha (311 aa).

One can recognise a CoA carboxyltransferase C-terminal domain in the interval 36-286 (NLEKETQKVY…SDYVLKAIEE (251 aa)).

This sequence belongs to the AccA family. As to quaternary structure, acetyl-CoA carboxylase is a heterohexamer composed of biotin carboxyl carrier protein (AccB), biotin carboxylase (AccC) and two subunits each of ACCase subunit alpha (AccA) and ACCase subunit beta (AccD).

The protein resides in the cytoplasm. It catalyses the reaction N(6)-carboxybiotinyl-L-lysyl-[protein] + acetyl-CoA = N(6)-biotinyl-L-lysyl-[protein] + malonyl-CoA. It participates in lipid metabolism; malonyl-CoA biosynthesis; malonyl-CoA from acetyl-CoA: step 1/1. Component of the acetyl coenzyme A carboxylase (ACC) complex. First, biotin carboxylase catalyzes the carboxylation of biotin on its carrier protein (BCCP) and then the CO(2) group is transferred by the carboxyltransferase to acetyl-CoA to form malonyl-CoA. The sequence is that of Acetyl-coenzyme A carboxylase carboxyl transferase subunit alpha from Campylobacter lari (strain RM2100 / D67 / ATCC BAA-1060).